Consider the following 454-residue polypeptide: Bifunctional protein GlmU (454 aa).

The interval 1 to 227 (MTQLSVVILA…FMEVEGANNR (227 aa)) is pyrophosphorylase. UDP-N-acetyl-alpha-D-glucosamine contacts are provided by residues 9 to 12 (LAAG), K23, Q74, 79 to 80 (GT), 101 to 103 (YGD), G138, E152, N167, and N225. Residue D103 participates in Mg(2+) binding. N225 contacts Mg(2+). The linker stretch occupies residues 228-248 (LQLAALERFYQKTQAEKLLLA). The tract at residues 249–454 (GVRLIDQARF…QGWQRPTKKK (206 aa)) is N-acetyltransferase. UDP-N-acetyl-alpha-D-glucosamine-binding residues include R331 and K349. H361 acts as the Proton acceptor in catalysis. UDP-N-acetyl-alpha-D-glucosamine contacts are provided by Y364 and N375. Acetyl-CoA contacts are provided by residues A378, 384–385 (NY), S403, A421, and R438.

In the N-terminal section; belongs to the N-acetylglucosamine-1-phosphate uridyltransferase family. It in the C-terminal section; belongs to the transferase hexapeptide repeat family. Homotrimer. Mg(2+) serves as cofactor.

The protein localises to the cytoplasm. It carries out the reaction alpha-D-glucosamine 1-phosphate + acetyl-CoA = N-acetyl-alpha-D-glucosamine 1-phosphate + CoA + H(+). The enzyme catalyses N-acetyl-alpha-D-glucosamine 1-phosphate + UTP + H(+) = UDP-N-acetyl-alpha-D-glucosamine + diphosphate. It participates in nucleotide-sugar biosynthesis; UDP-N-acetyl-alpha-D-glucosamine biosynthesis; N-acetyl-alpha-D-glucosamine 1-phosphate from alpha-D-glucosamine 6-phosphate (route II): step 2/2. Its pathway is nucleotide-sugar biosynthesis; UDP-N-acetyl-alpha-D-glucosamine biosynthesis; UDP-N-acetyl-alpha-D-glucosamine from N-acetyl-alpha-D-glucosamine 1-phosphate: step 1/1. It functions in the pathway bacterial outer membrane biogenesis; LPS lipid A biosynthesis. Functionally, catalyzes the last two sequential reactions in the de novo biosynthetic pathway for UDP-N-acetylglucosamine (UDP-GlcNAc). The C-terminal domain catalyzes the transfer of acetyl group from acetyl coenzyme A to glucosamine-1-phosphate (GlcN-1-P) to produce N-acetylglucosamine-1-phosphate (GlcNAc-1-P), which is converted into UDP-GlcNAc by the transfer of uridine 5-monophosphate (from uridine 5-triphosphate), a reaction catalyzed by the N-terminal domain. The sequence is that of Bifunctional protein GlmU from Actinobacillus pleuropneumoniae serotype 7 (strain AP76).